A 202-amino-acid chain; its full sequence is Pyridoxal 5'-phosphate synthase subunit PdxT (202 aa).

An L-glutamine-binding site is contributed by 52-54; that stretch reads GES. Cys-84 (nucleophile) is an active-site residue. Residues Arg-116 and 143–144 contribute to the L-glutamine site; that span reads IR. Catalysis depends on charge relay system residues His-184 and Glu-186.

The protein belongs to the glutaminase PdxT/SNO family. As to quaternary structure, in the presence of PdxS, forms a dodecamer of heterodimers. Only shows activity in the heterodimer.

It carries out the reaction aldehydo-D-ribose 5-phosphate + D-glyceraldehyde 3-phosphate + L-glutamine = pyridoxal 5'-phosphate + L-glutamate + phosphate + 3 H2O + H(+). The catalysed reaction is L-glutamine + H2O = L-glutamate + NH4(+). Its pathway is cofactor biosynthesis; pyridoxal 5'-phosphate biosynthesis. Catalyzes the hydrolysis of glutamine to glutamate and ammonia as part of the biosynthesis of pyridoxal 5'-phosphate. The resulting ammonia molecule is channeled to the active site of PdxS. The polypeptide is Pyridoxal 5'-phosphate synthase subunit PdxT (Pyrobaculum neutrophilum (strain DSM 2338 / JCM 9278 / NBRC 100436 / V24Sta) (Thermoproteus neutrophilus)).